Consider the following 224-residue polypeptide: Zinc finger C4H2 domain-containing protein (224 aa).

A coiled-coil region spans residues 11–104 (LESIKEIRNK…RRLHDEYKPL (94 aa)). A C4H2-type zinc finger spans residues 189–206 (CLSCHQQIHRNAPICPLC).

Expressed in fetal tissues, including in brain, intestine, lung, kidney and muscle. Isoform 1 is expressed in numerous fetal brain regions. Isoform 3 is highly expressed in numerous fetal brain regions and spinal cord.

The protein localises to the cytoplasm. Its subcellular location is the nucleus. It localises to the postsynaptic cell membrane. Plays a role in interneurons differentiation. Involved in neuronal development and in neuromuscular junction formation. The protein is Zinc finger C4H2 domain-containing protein (ZC4H2) of Homo sapiens (Human).